The chain runs to 495 residues: UDP-N-acetylmuramoyl-L-alanyl-D-glutamate--2,6-diaminopimelate ligase (495 aa).

UDP-N-acetyl-alpha-D-muramoyl-L-alanyl-D-glutamate-binding positions include Leu-27, Ser-29, and 44–46 (HQA). Residue 116–122 (GTNGKTT) coordinates ATP. UDP-N-acetyl-alpha-D-muramoyl-L-alanyl-D-glutamate is bound by residues Asn-157, 158–159 (TT), Ser-185, Gln-191, and Arg-193. N6-carboxylysine is present on Lys-225. Meso-2,6-diaminopimelate is bound by residues Arg-390, 414–417 (DNPR), Gly-465, and Glu-469. Positions 414-417 (DNPR) match the Meso-diaminopimelate recognition motif motif.

This sequence belongs to the MurCDEF family. MurE subfamily. It depends on Mg(2+) as a cofactor. Post-translationally, carboxylation is probably crucial for Mg(2+) binding and, consequently, for the gamma-phosphate positioning of ATP.

The protein localises to the cytoplasm. The catalysed reaction is UDP-N-acetyl-alpha-D-muramoyl-L-alanyl-D-glutamate + meso-2,6-diaminopimelate + ATP = UDP-N-acetyl-alpha-D-muramoyl-L-alanyl-gamma-D-glutamyl-meso-2,6-diaminopimelate + ADP + phosphate + H(+). The protein operates within cell wall biogenesis; peptidoglycan biosynthesis. Functionally, catalyzes the addition of meso-diaminopimelic acid to the nucleotide precursor UDP-N-acetylmuramoyl-L-alanyl-D-glutamate (UMAG) in the biosynthesis of bacterial cell-wall peptidoglycan. In Shigella flexneri, this protein is UDP-N-acetylmuramoyl-L-alanyl-D-glutamate--2,6-diaminopimelate ligase.